A 320-amino-acid chain; its full sequence is Polyprenal reductase 1 (320 aa).

6 helical membrane passes run Ile-5–Val-25, Phe-64–Trp-84, Met-143–Cys-163, Pro-200–Ile-220, Ile-243–Val-263, and Leu-266–Val-286.

It belongs to the steroid 5-alpha reductase family. Polyprenal reductase subfamily. In terms of tissue distribution, expressed in roots and flowers.

Its subcellular location is the cell membrane. The enzyme catalyses a di-trans,poly-cis-dolichal + NADP(+) = a di-trans,poly-cis-polyprenal + NADPH + H(+). The protein operates within protein modification; protein glycosylation. In terms of biological role, plays a key role in early steps of protein N-linked glycosylation by being involved in the conversion of polyprenol into dolichol. Acts as a polyprenal reductase that mediates the reduction of polyprenal into dolichal in a NADP-dependent mechanism. Dolichols are required for the synthesis of dolichol-linked monosaccharides and the oligosaccharide precursor used for N-glycosylation. Involved in the regulation of plant growth and reproductive processes. The polypeptide is Polyprenal reductase 1 (Arabidopsis thaliana (Mouse-ear cress)).